The sequence spans 494 residues: MSKEVVNTKAEASRVNALAAVRNYKVCPRLEYKTISGVQGPLVIIEDVKFPKYSEIVTIHLSDNTTRQGQILEVCGKKAVIQVFEGTSGIDNKNSYVEVSGDILKMPMSDEMLGRVFNGSGKPIDKGPNILADDYLDINGNPINPQCRVYPKEMIQTGISTIDVMNSIVRGQKIPLFSAAGLPHNEIGAQICRQASLVQGKDVLDHSDDNFAVVFGAMGVNMETARYFRQDFEENGKMERVCLFLNLANDPTIERILTPRIALTTAEYLAFEKEMHVFVILTDMSSYADALREVSSAREEVPGRRGYPGYMYSDLSTIYERAGRVEGRNGSITQFPILTMPNDDITHPIPDLTGYITEGQIFVDRNLYNRQIYPPINVLPSLSRLMKSGIGHNMTRIDHPYVSDQLYSNYAIAQDVKAMKAVIGEEALSNDDILYLEFLDKFEKRFITQNTYECRDIYQSLDIAWELLRIFPEDMLKKIKTDILSKYYPRHHAN.

Belongs to the ATPase alpha/beta chains family. V-ATPase is a heteromultimeric enzyme composed of a peripheral catalytic V1 complex (main components: subunits A, B, C, D, E, and F) attached to an integral membrane V0 proton pore complex (main component: the proteolipid protein).

In terms of biological role, non-catalytic subunit of the peripheral V1 complex of vacuolar ATPase. V-ATPase is responsible for acidifying a variety of intracellular compartments in eukaryotic cells. The sequence is that of V-type proton ATPase subunit B (VAPB) from Plasmodium falciparum.